A 527-amino-acid polypeptide reads, in one-letter code: Amidophosphoribosyltransferase (527 aa).

The segment at 1-30 (MAVDSDYVTDRAAGSRQTVTGQQPEQDLNS) is disordered. Positions 1-34 (MAVDSDYVTDRAAGSRQTVTGQQPEQDLNSPREE) are excised as a propeptide. Residues 15–29 (SRQTVTGQQPEQDLN) show a composition bias toward polar residues. Cys35 (nucleophile) is an active-site residue. Positions 35–261 (CGVFGVWAPG…PGELLAIDAD (227 aa)) constitute a Glutamine amidotransferase type-2 domain. Cys276 serves as a coordination point for [4Fe-4S] cluster. Ser323, Asp385, and Asp386 together coordinate Mg(2+). Residues Cys422, Cys478, and Cys481 each contribute to the [4Fe-4S] cluster site.

It in the C-terminal section; belongs to the purine/pyrimidine phosphoribosyltransferase family. The cofactor is Mg(2+). It depends on [4Fe-4S] cluster as a cofactor.

It catalyses the reaction 5-phospho-beta-D-ribosylamine + L-glutamate + diphosphate = 5-phospho-alpha-D-ribose 1-diphosphate + L-glutamine + H2O. Its pathway is purine metabolism; IMP biosynthesis via de novo pathway; N(1)-(5-phospho-D-ribosyl)glycinamide from 5-phospho-alpha-D-ribose 1-diphosphate: step 1/2. Its function is as follows. Catalyzes the formation of phosphoribosylamine from phosphoribosylpyrophosphate (PRPP) and glutamine. The chain is Amidophosphoribosyltransferase from Mycobacterium bovis (strain ATCC BAA-935 / AF2122/97).